The chain runs to 320 residues: Cytochrome f (320 aa).

The signal sequence occupies residues 1 to 35 (MQNRNTFSWVKEQMTRSIFVSMMIYIITRASISNA). 4 residues coordinate heme: Tyr-36, Cys-56, Cys-59, and His-60. Residues 286–306 (IQGLFLFLASVILAQIFLVLK) form a helical membrane-spanning segment.

The protein belongs to the cytochrome f family. The 4 large subunits of the cytochrome b6-f complex are cytochrome b6, subunit IV (17 kDa polypeptide, petD), cytochrome f and the Rieske protein, while the 4 small subunits are PetG, PetL, PetM and PetN. The complex functions as a dimer. It depends on heme as a cofactor.

The protein localises to the plastid. Its subcellular location is the chloroplast thylakoid membrane. In terms of biological role, component of the cytochrome b6-f complex, which mediates electron transfer between photosystem II (PSII) and photosystem I (PSI), cyclic electron flow around PSI, and state transitions. This chain is Cytochrome f, found in Amborella trichopoda.